The following is a 287-amino-acid chain: uncharacterized protein (287 aa).

The next 10 membrane-spanning stretches (helical) occupy residues 4–24 (TTNGWINGFIGVLIFSGSLPA), 36–56 (FLTVCRAAIAGVLAGGLLLIF), 66–86 (LISLLVVAFGVVIGFPLLTAL), 93–113 (SAHAIVFIGLLPLATAVFGVL), 122–142 (VFWIFSAAGSLLVAGFALIQG), 148–168 (LGDAYMLASIVVCGLGYAEGA), 179–199 (VISWALVLSLPLMLPLSFFFT), 208–228 (VPALLSLAYVSLFSMLIGFVF), 237–259 (GIAAVGQLQLLQPFFGLLLASVI), and 264–286 (VGWALVAVNIAVIMCVAAARRFA). EamA domains follow at residues 16–139 (LIFS…GFAL) and 158–284 (VVCG…AARR).

Belongs to the EamA transporter family.

It is found in the cell membrane. This is an uncharacterized protein from Bacillus subtilis (strain 168).